Consider the following 502-residue polypeptide: Glycerol kinase (502 aa).

Residue Thr-14 coordinates ADP. ATP is bound by residues Thr-14, Thr-15, and Ser-16. A sn-glycerol 3-phosphate-binding site is contributed by Thr-14. Residue Arg-18 participates in ADP binding. Residues Arg-84, Glu-85, Tyr-136, and Asp-246 each contribute to the sn-glycerol 3-phosphate site. Arg-84, Glu-85, Tyr-136, Asp-246, and Gln-247 together coordinate glycerol. Positions 268 and 311 each coordinate ADP. 4 residues coordinate ATP: Thr-268, Gly-311, Gln-315, and Gly-412. ADP-binding residues include Gly-412 and Asn-416.

Belongs to the FGGY kinase family.

The catalysed reaction is glycerol + ATP = sn-glycerol 3-phosphate + ADP + H(+). It functions in the pathway polyol metabolism; glycerol degradation via glycerol kinase pathway; sn-glycerol 3-phosphate from glycerol: step 1/1. With respect to regulation, inhibited by fructose 1,6-bisphosphate (FBP). Key enzyme in the regulation of glycerol uptake and metabolism. Catalyzes the phosphorylation of glycerol to yield sn-glycerol 3-phosphate. This chain is Glycerol kinase, found in Pasteurella multocida (strain Pm70).